Consider the following 833-residue polypeptide: 3-hydroxy-3-methylglutaryl-coenzyme A reductase (833 aa).

4 helical membrane passes run 10–32, 91–117, 160–180, and 301–321; these read FCAR…AASV, YLLI…LFWS, LALL…LVGV, and SADY…FVFF. Residues 322–419 are linker; it reads EEQRNWVIDM…EEVVMLVEQS (98 aa). The disordered stretch occupies residues 347 to 374; sequence KPKFSVGDDSNSEVSTQTEGVLEDEWPT. Over residues 354 to 365 the composition is skewed to polar residues; the sequence is DDSNSEVSTQTE. The interval 420 to 833 is catalytic; the sequence is HIPLHRLEAV…ENITLKVPTL (414 aa). Residues Glu504 and Lys635 each act as charge relay system in the active site. Asn680 carries N-linked (GlcNAc...) asparagine glycosylation. Asp711 serves as the catalytic Charge relay system. Residues Asn715 and Asn720 are each glycosylated (N-linked (GlcNAc...) asparagine). His809 acts as the Proton donor in catalysis. Asn813 and Asn825 each carry an N-linked (GlcNAc...) asparagine glycan.

This sequence belongs to the HMG-CoA reductase family.

It localises to the endoplasmic reticulum membrane. It carries out the reaction (R)-mevalonate + 2 NADP(+) + CoA = (3S)-3-hydroxy-3-methylglutaryl-CoA + 2 NADPH + 2 H(+). Its pathway is metabolic intermediate biosynthesis; (R)-mevalonate biosynthesis; (R)-mevalonate from acetyl-CoA: step 3/3. The activity of HMG-CoA-reductase is suppressed by exogenous mevalonate. In terms of biological role, synthesis of mevalonate for the production of non-sterol isoprenoids, which are essential for growth differentiation. The polypeptide is 3-hydroxy-3-methylglutaryl-coenzyme A reductase (HMGR) (Agrotis ipsilon (Black cutworm moth)).